Reading from the N-terminus, the 744-residue chain is Catalase-peroxidase (744 aa).

Residues 1–22 form the signal peptide; it reads MSPRARRCTDRCARMSERSMNA. A cross-link (tryptophyl-tyrosyl-methioninium (Trp-Tyr) (with M-260)) is located at residues 114–234; it reads WHSAGTYRLA…LGATEMGLIY (121 aa). Catalysis depends on H115, which acts as the Proton acceptor. Residues 234–260 constitute a cross-link (tryptophyl-tyrosyl-methioninium (Tyr-Met) (with W-114)); it reads YVNPEGPDRNGDPISAAKFIRETFARM. A heme b-binding site is contributed by H275.

Belongs to the peroxidase family. Peroxidase/catalase subfamily. In terms of assembly, homodimer or homotetramer. Heme b serves as cofactor. Post-translationally, formation of the three residue Trp-Tyr-Met cross-link is important for the catalase, but not the peroxidase activity of the enzyme.

It carries out the reaction H2O2 + AH2 = A + 2 H2O. It catalyses the reaction 2 H2O2 = O2 + 2 H2O. Bifunctional enzyme with both catalase and broad-spectrum peroxidase activity. The chain is Catalase-peroxidase from Azorhizobium caulinodans (strain ATCC 43989 / DSM 5975 / JCM 20966 / LMG 6465 / NBRC 14845 / NCIMB 13405 / ORS 571).